Consider the following 563-residue polypeptide: Eukaryotic translation initiation factor 3 subunit D (563 aa).

A disordered region spans residues 95-136; the sequence is PGYMRNRNRFNQRGGYRRDNRGGRFQGQGGNMGMQNLSRGRD. Residues 294–308 form an RNA gate region; it reads EFDLLTVGETANDLN. The tract at residues 528-563 is disordered; the sequence is IPNSTFETDEEDDDDDEDDVENDDGDDEKDEGDGED. Over residues 534–563 the composition is skewed to acidic residues; sequence ETDEEDDDDDEDDVENDDGDDEKDEGDGED.

It belongs to the eIF-3 subunit D family. As to quaternary structure, component of the eukaryotic translation initiation factor 3 (eIF-3) complex.

Its subcellular location is the cytoplasm. Its function is as follows. mRNA cap-binding component of the eukaryotic translation initiation factor 3 (eIF-3) complex, which is involved in protein synthesis of a specialized repertoire of mRNAs and, together with other initiation factors, stimulates binding of mRNA and methionyl-tRNAi to the 40S ribosome. The eIF-3 complex specifically targets and initiates translation of a subset of mRNAs involved in cell proliferation. In the eIF-3 complex, eif3d specifically recognizes and binds the 7-methylguanosine cap of a subset of mRNAs. This Nematostella vectensis (Starlet sea anemone) protein is Eukaryotic translation initiation factor 3 subunit D.